We begin with the raw amino-acid sequence, 375 residues long: Chaperone protein DnaJ (375 aa).

The 66-residue stretch at 5 to 70 (DFYETLGVAK…QKRAAYDRYG (66 aa)) folds into the J domain. The CR-type zinc finger occupies 136–214 (GKTAQIRVPT…CHGQGRVTEE (79 aa)). Zn(2+) is bound by residues C149, C152, C166, C169, C188, C191, C202, and C205. CXXCXGXG motif repeat units follow at residues 149 to 156 (CDVCSGSG), 166 to 173 (CGTCQGTG), 188 to 195 (CPTCHGRG), and 202 to 209 (CPKCHGQG).

Belongs to the DnaJ family. Homodimer. Requires Zn(2+) as cofactor.

Its subcellular location is the cytoplasm. Participates actively in the response to hyperosmotic and heat shock by preventing the aggregation of stress-denatured proteins and by disaggregating proteins, also in an autonomous, DnaK-independent fashion. Unfolded proteins bind initially to DnaJ; upon interaction with the DnaJ-bound protein, DnaK hydrolyzes its bound ATP, resulting in the formation of a stable complex. GrpE releases ADP from DnaK; ATP binding to DnaK triggers the release of the substrate protein, thus completing the reaction cycle. Several rounds of ATP-dependent interactions between DnaJ, DnaK and GrpE are required for fully efficient folding. Also involved, together with DnaK and GrpE, in the DNA replication of plasmids through activation of initiation proteins. The sequence is that of Chaperone protein DnaJ from Rhizobium etli (strain ATCC 51251 / DSM 11541 / JCM 21823 / NBRC 15573 / CFN 42).